A 232-amino-acid chain; its full sequence is Enolase-phosphatase E1 (232 aa).

Belongs to the HAD-like hydrolase superfamily. MasA/MtnC family. In terms of assembly, monomer. Requires Mg(2+) as cofactor.

It carries out the reaction 5-methylsulfanyl-2,3-dioxopentyl phosphate + H2O = 1,2-dihydroxy-5-(methylsulfanyl)pent-1-en-3-one + phosphate. The protein operates within amino-acid biosynthesis; L-methionine biosynthesis via salvage pathway; L-methionine from S-methyl-5-thio-alpha-D-ribose 1-phosphate: step 3/6. Its pathway is amino-acid biosynthesis; L-methionine biosynthesis via salvage pathway; L-methionine from S-methyl-5-thio-alpha-D-ribose 1-phosphate: step 4/6. Its function is as follows. Bifunctional enzyme that catalyzes the enolization of 2,3-diketo-5-methylthiopentyl-1-phosphate (DK-MTP-1-P) into the intermediate 2-hydroxy-3-keto-5-methylthiopentenyl-1-phosphate (HK-MTPenyl-1-P), which is then dephosphorylated to form the acireductone 1,2-dihydroxy-3-keto-5-methylthiopentene (DHK-MTPene). This is Enolase-phosphatase E1 from Xanthomonas euvesicatoria pv. vesicatoria (strain 85-10) (Xanthomonas campestris pv. vesicatoria).